The following is a 375-amino-acid chain: Alcohol dehydrogenase 1 (375 aa).

Position 1 is an N-acetylserine (S1). Zn(2+) contacts are provided by C46, H67, C97, C100, C103, C111, and C174. NAD(+) contacts are provided by residues 199 to 204, D223, K228, 293 to 295, and R370; these read GLGGVG and VGV.

Belongs to the zinc-containing alcohol dehydrogenase family. Class-I subfamily. In terms of assembly, homodimer. Requires Zn(2+) as cofactor.

Its subcellular location is the cytoplasm. It carries out the reaction a primary alcohol + NAD(+) = an aldehyde + NADH + H(+). The catalysed reaction is a secondary alcohol + NAD(+) = a ketone + NADH + H(+). This Naja naja (Indian cobra) protein is Alcohol dehydrogenase 1.